Consider the following 221-residue polypeptide: Putative 5'(3')-deoxyribonucleotidase R824 (221 aa).

Positions 16 and 18 each coordinate Mg(2+). The Nucleophile role is filled by D18. Positions 18, 103, and 138 each coordinate phosphate. D149 contacts Mg(2+).

This sequence belongs to the 5'(3')-deoxyribonucleotidase family. Requires Mg(2+) as cofactor.

In terms of biological role, dephosphorylates the 5' and 2'(3')-phosphates of deoxyribonucleotides. In Acanthamoeba polyphaga mimivirus (APMV), this protein is Putative 5'(3')-deoxyribonucleotidase R824.